The chain runs to 509 residues: Putative thymidine phosphorylase (509 aa).

Belongs to the thymidine/pyrimidine-nucleoside phosphorylase family. Type 2 subfamily.

The enzyme catalyses thymidine + phosphate = 2-deoxy-alpha-D-ribose 1-phosphate + thymine. The polypeptide is Putative thymidine phosphorylase (Chelativorans sp. (strain BNC1)).